A 498-amino-acid chain; its full sequence is Angiopoietin-1 (498 aa).

The N-terminal stretch at Met1–Cys19 is a signal peptide. N-linked (GlcNAc...) asparagine glycosylation is found at Asn92, Asn122, Asn154, Asn243, and Asn295. Residues Arg158–Leu254 adopt a coiled-coil conformation. The Fibrinogen C-terminal domain occupies Lys277–Asp497. 2 disulfides stabilise this stretch: Cys286–Cys315 and Cys439–Cys452.

Homooligomer. Interacts with TEK/TIE2. Interacts with SVEP1/polydom. Interacts with THBD; this interaction significantly inhibits the generation of activated PC and TAFIa/CPB2 by the thrombin/thrombomodulin complex.

Its subcellular location is the secreted. Functionally, binds and activates TIE2 receptor by inducing its tyrosine phosphorylation. Implicated in endothelial developmental processes later and distinct from that of VEGF. Appears to play a crucial role in mediating reciprocal interactions between the endothelium and surrounding matrix and mesenchyme. Mediates blood vessel maturation/stability. It may play an important role in the heart early development. The chain is Angiopoietin-1 (ANGPT1) from Sus scrofa (Pig).